The chain runs to 481 residues: Protein NRT1/ PTR FAMILY 1.3 (481 aa).

The next 12 helical transmembrane spans lie at 32-52, 57-77, 88-108, 124-144, 173-193, 202-222, 259-279, 302-322, 333-353, 374-394, 422-442, and 451-471; these read LAYF…YGMG, ANIL…GAFI, IGFG…TTII, LLKS…AGGV, FNWY…LLVF, IGFG…FAAS, IWST…FIVL, IFLV…IVPL, LGVM…ISAL, AMWL…NTIA, ASLI…GSWI, and LDYY…YFVW.

It belongs to the major facilitator superfamily. Proton-dependent oligopeptide transporter (POT/PTR) (TC 2.A.17) family. Expressed in roots.

The protein resides in the membrane. The sequence is that of Protein NRT1/ PTR FAMILY 1.3 (NPF1.3) from Arabidopsis thaliana (Mouse-ear cress).